A 776-amino-acid polypeptide reads, in one-letter code: Peregrinol diphosphate synthase CPS1, chloroplastic (776 aa).

A chloroplast-targeting transit peptide spans 1-17 (MASTPTLNLSITTPFVR). K238 contributes to the substrate binding site. Mg(2+) contacts are provided by D371 and D373. A DXDD motif motif is present at residues 371-374 (DIDD). K457 contacts substrate.

This sequence belongs to the terpene synthase family. The cofactor is Mg(2+). In terms of tissue distribution, present in both leaves and flowers, with higher levels in leaves.

Its subcellular location is the plastid. It localises to the chloroplast. The enzyme catalyses peregrinol diphosphate = (2E,6E,10E)-geranylgeranyl diphosphate + H2O. It participates in secondary metabolite biosynthesis; terpenoid biosynthesis. Involved in the biosynthesis of labdane-type diterpenoid including marrubiin and other labdane-related furanoid diterpenoids with potential applications as anti-diabetics, analgesics or vasorelaxants. Terpene synthase that produces peregrinol diphosphate from geranylgeranyl diphosphate (GGPP). The protein is Peregrinol diphosphate synthase CPS1, chloroplastic of Marrubium vulgare (White horehound).